Reading from the N-terminus, the 123-residue chain is Crossover junction endodeoxyribonuclease Hjc (123 aa).

A Mg(2+)-binding site is contributed by glutamate 9. Residue serine 29 is part of the active site. Positions 33 and 46 each coordinate Mg(2+).

The protein belongs to the Holliday junction resolvase Hjc family. In terms of assembly, homodimer. Probably interacts with PCNA and RadB. The cofactor is Mg(2+). Mn(2+) is required as a cofactor.

The enzyme catalyses Endonucleolytic cleavage at a junction such as a reciprocal single-stranded crossover between two homologous DNA duplexes (Holliday junction).. With respect to regulation, cleavage inhibited by RadB in the absence (but not presence) of ATP. A structure-specific endonuclease that resolves Holliday junction (HJ) intermediates during genetic recombination. Cleaves 4-way DNA junctions introducing paired nicks in opposing strands, leaving a 5'-terminal phosphate and a 3'-terminal hydroxyl group that are subsequently ligated to produce recombinant products. Cleaves both mobile and immobile junctions. Binds 4-way junction DNA, a synthetic Hj, binding is not competed by dsDNA. The polypeptide is Crossover junction endodeoxyribonuclease Hjc (Pyrococcus furiosus (strain ATCC 43587 / DSM 3638 / JCM 8422 / Vc1)).